Consider the following 513-residue polypeptide: GMP synthase [glutamine-hydrolyzing] (513 aa).

Residues 5–195 (LVLVIDFGGQ…VYNICGCTGD (191 aa)) form the Glutamine amidotransferase type-1 domain. Catalysis depends on C82, which acts as the Nucleophile. Active-site residues include H169 and E171. A GMPS ATP-PPase domain is found at 196–388 (WKMDSFVEKT…LGIPEKLVFR (193 aa)). 223 to 229 (SGGVDSS) serves as a coordination point for ATP.

As to quaternary structure, homodimer.

The catalysed reaction is XMP + L-glutamine + ATP + H2O = GMP + L-glutamate + AMP + diphosphate + 2 H(+). Its pathway is purine metabolism; GMP biosynthesis; GMP from XMP (L-Gln route): step 1/1. Catalyzes the synthesis of GMP from XMP. The chain is GMP synthase [glutamine-hydrolyzing] from Clostridium botulinum (strain Alaska E43 / Type E3).